The following is a 156-amino-acid chain: Small ribosomal subunit protein uS7 (156 aa).

It belongs to the universal ribosomal protein uS7 family. As to quaternary structure, part of the 30S ribosomal subunit. Contacts proteins S9 and S11.

Its function is as follows. One of the primary rRNA binding proteins, it binds directly to 16S rRNA where it nucleates assembly of the head domain of the 30S subunit. Is located at the subunit interface close to the decoding center, probably blocks exit of the E-site tRNA. This Vibrio vulnificus (strain CMCP6) protein is Small ribosomal subunit protein uS7.